A 168-amino-acid polypeptide reads, in one-letter code: Cilia- and flagella-associated protein HOATZ (168 aa).

Positions 142–168 (PKDKVPKSKEVLSESGLRDQEEVKALE) are disordered.

Belongs to the HOATZ family. In terms of tissue distribution, specifically expressed in tissues with motile cilia and flagella, such as brain ependyma, lung, testis, and oviduct but not in whole brain, liver,kidney, spleen, and eyeball.

It localises to the cytoplasm. Its subcellular location is the cell projection. The protein localises to the cilium. In terms of biological role, required for motile ciliogenesis and flagellar genesis by mediating the maturation of the glycolytic enzyme ENO4. This chain is Cilia- and flagella-associated protein HOATZ, found in Mus musculus (Mouse).